We begin with the raw amino-acid sequence, 338 residues long: tRNA N6-adenosine threonylcarbamoyltransferase (338 aa).

Histidine 111 and histidine 115 together coordinate Fe cation. Substrate contacts are provided by residues 134–138 (LVSGG), aspartate 167, glycine 180, and asparagine 272. Fe cation is bound at residue aspartate 300.

It belongs to the KAE1 / TsaD family. It depends on Fe(2+) as a cofactor.

It localises to the cytoplasm. It catalyses the reaction L-threonylcarbamoyladenylate + adenosine(37) in tRNA = N(6)-L-threonylcarbamoyladenosine(37) in tRNA + AMP + H(+). Functionally, required for the formation of a threonylcarbamoyl group on adenosine at position 37 (t(6)A37) in tRNAs that read codons beginning with adenine. Is involved in the transfer of the threonylcarbamoyl moiety of threonylcarbamoyl-AMP (TC-AMP) to the N6 group of A37, together with TsaE and TsaB. TsaD likely plays a direct catalytic role in this reaction. In Shewanella baltica (strain OS155 / ATCC BAA-1091), this protein is tRNA N6-adenosine threonylcarbamoyltransferase.